The following is a 180-amino-acid chain: Cytidylate kinase (180 aa).

Glycine 7–threonine 15 contacts ATP.

It belongs to the cytidylate kinase family. Type 2 subfamily.

It localises to the cytoplasm. The catalysed reaction is CMP + ATP = CDP + ADP. The enzyme catalyses dCMP + ATP = dCDP + ADP. This chain is Cytidylate kinase, found in Sulfurisphaera tokodaii (strain DSM 16993 / JCM 10545 / NBRC 100140 / 7) (Sulfolobus tokodaii).